A 170-amino-acid chain; its full sequence is Small ribosomal subunit protein uS5 (170 aa).

The S5 DRBM domain occupies 11-74 (ILEKLVHINR…ETARRVLIHV (64 aa)).

The protein belongs to the universal ribosomal protein uS5 family. In terms of assembly, part of the 30S ribosomal subunit. Contacts proteins S4 and S8.

With S4 and S12 plays an important role in translational accuracy. Functionally, located at the back of the 30S subunit body where it stabilizes the conformation of the head with respect to the body. In Pelagibacter ubique (strain HTCC1062), this protein is Small ribosomal subunit protein uS5.